A 446-amino-acid chain; its full sequence is Probable tRNA modification GTPase MnmE (446 aa).

3 residues coordinate (6S)-5-formyl-5,6,7,8-tetrahydrofolate: Arg28, Glu87, and Arg126. In terms of domain architecture, TrmE-type G spans 218–373; sequence GIQVALLGPA…LKQLIWQQAT (156 aa). Asn228 contributes to the K(+) binding site. GTP-binding positions include 228–233, 247–253, and 272–275; these read NAGKST, TPIAGTT, and DTAG. Ser232 is a binding site for Mg(2+). Residues Thr247, Ile249, and Thr252 each coordinate K(+). Thr253 contacts Mg(2+). Residue Lys446 participates in (6S)-5-formyl-5,6,7,8-tetrahydrofolate binding.

The protein belongs to the TRAFAC class TrmE-Era-EngA-EngB-Septin-like GTPase superfamily. TrmE GTPase family. Requires K(+) as cofactor.

The protein resides in the plastid. It localises to the chloroplast. Functionally, exhibits a very high intrinsic GTPase hydrolysis rate. Involved in the addition of a carboxymethylaminomethyl (cmnm) group at the wobble position (U34) of certain tRNAs, forming tRNA-cmnm(5)s(2)U34. The chain is Probable tRNA modification GTPase MnmE from Cyanidioschyzon merolae (strain NIES-3377 / 10D) (Unicellular red alga).